The following is a 255-amino-acid chain: 4-hydroxy-tetrahydrodipicolinate reductase (255 aa).

Residues 9-14 (GFKGRM), 89-91 (GTT), and 115-118 (APNF) contribute to the NAD(+) site. The active-site Proton donor/acceptor is histidine 145. Histidine 146 provides a ligand contact to (S)-2,3,4,5-tetrahydrodipicolinate. Lysine 149 serves as the catalytic Proton donor. 155-156 (GT) is a binding site for (S)-2,3,4,5-tetrahydrodipicolinate.

It belongs to the DapB family.

Its subcellular location is the cytoplasm. The enzyme catalyses (S)-2,3,4,5-tetrahydrodipicolinate + NAD(+) + H2O = (2S,4S)-4-hydroxy-2,3,4,5-tetrahydrodipicolinate + NADH + H(+). It catalyses the reaction (S)-2,3,4,5-tetrahydrodipicolinate + NADP(+) + H2O = (2S,4S)-4-hydroxy-2,3,4,5-tetrahydrodipicolinate + NADPH + H(+). Its pathway is amino-acid biosynthesis; L-lysine biosynthesis via DAP pathway; (S)-tetrahydrodipicolinate from L-aspartate: step 4/4. Catalyzes the conversion of 4-hydroxy-tetrahydrodipicolinate (HTPA) to tetrahydrodipicolinate. The polypeptide is 4-hydroxy-tetrahydrodipicolinate reductase (Streptococcus mutans serotype c (strain ATCC 700610 / UA159)).